Consider the following 182-residue polypeptide: Dual-action ribosomal maturation protein DarP (182 aa).

It belongs to the DarP family.

It is found in the cytoplasm. Functionally, member of a network of 50S ribosomal subunit biogenesis factors which assembles along the 30S-50S interface, preventing incorrect 23S rRNA structures from forming. Promotes peptidyl transferase center (PTC) maturation. The polypeptide is Dual-action ribosomal maturation protein DarP (Serratia proteamaculans (strain 568)).